The primary structure comprises 376 residues: Alcohol dehydrogenase class-3 (376 aa).

Ala1 is subject to N-acetylalanine. Zn(2+) is bound by residues Cys47, His69, Cys99, Cys102, Cys105, Cys113, and Cys176.

Belongs to the zinc-containing alcohol dehydrogenase family. Class-III subfamily. Homodimer. Zn(2+) is required as a cofactor.

Its subcellular location is the cytoplasm. The catalysed reaction is a primary alcohol + NAD(+) = an aldehyde + NADH + H(+). It carries out the reaction a secondary alcohol + NAD(+) = a ketone + NADH + H(+). The enzyme catalyses S-(hydroxymethyl)glutathione + NADP(+) = S-formylglutathione + NADPH + H(+). It catalyses the reaction S-(hydroxymethyl)glutathione + NAD(+) = S-formylglutathione + NADH + H(+). The catalysed reaction is S-nitrosoglutathione + NADH + H(+) = S-(hydroxysulfenamide)glutathione + NAD(+). Functionally, class-III ADH is remarkably ineffective in oxidizing ethanol, but it readily catalyzes the oxidation of long-chain primary alcohols and the oxidation of S-(hydroxymethyl) glutathione. Also acts as a S-nitroso-glutathione reductase by catalyzing the NADH-dependent reduction of S-nitrosoglutathione, thereby regulating protein S-nitrosylation. The sequence is that of Alcohol dehydrogenase class-3 from Scyliorhinus canicula (Small-spotted catshark).